The following is a 556-amino-acid chain: Glucose-6-phosphate isomerase (556 aa).

Catalysis depends on Glu-360, which acts as the Proton donor. Residues His-391 and Lys-519 contribute to the active site.

This sequence belongs to the GPI family.

It localises to the cytoplasm. It catalyses the reaction alpha-D-glucose 6-phosphate = beta-D-fructose 6-phosphate. It functions in the pathway carbohydrate biosynthesis; gluconeogenesis. It participates in carbohydrate degradation; glycolysis; D-glyceraldehyde 3-phosphate and glycerone phosphate from D-glucose: step 2/4. Functionally, catalyzes the reversible isomerization of glucose-6-phosphate to fructose-6-phosphate. The chain is Glucose-6-phosphate isomerase from Acinetobacter baumannii (strain ATCC 17978 / DSM 105126 / CIP 53.77 / LMG 1025 / NCDC KC755 / 5377).